A 311-amino-acid chain; its full sequence is Protein nfe2 (311 aa).

Responsible for the nodulation efficiency and competitive ability of strain GR4 on alfalfa roots. This chain is Protein nfe2 (nfe2), found in Rhizobium meliloti (Ensifer meliloti).